The sequence spans 848 residues: ATP-dependent Clp protease ATP-binding subunit ClpC1 (848 aa).

Positions Phe2–Gly144 constitute a Clp R domain. Repeat regions lie at residues Phe5–Gly70 and Phe80–Gly144. Positions Leu171–Pro418 are i. Position 216–223 (Gly216–Thr223) interacts with ATP. Positions Asp425–Gln460 constitute a UVR domain. An II region spans residues Val479–Thr670. Gly553–Thr560 serves as a coordination point for ATP. The segment at Thr821–Arg848 is disordered.

It belongs to the ClpA/ClpB family. ClpC subfamily.

Its function is as follows. ATP-dependent specificity component of the Clp protease. It directs the protease to specific substrates. Can perform chaperone functions in the absence of ClpP. In Mycobacterium tuberculosis (strain CDC 1551 / Oshkosh), this protein is ATP-dependent Clp protease ATP-binding subunit ClpC1 (clpC1).